The primary structure comprises 157 residues: Protein-export protein SecB (157 aa).

The protein belongs to the SecB family. In terms of assembly, homotetramer, a dimer of dimers. One homotetramer interacts with 1 SecA dimer.

It localises to the cytoplasm. Functionally, one of the proteins required for the normal export of preproteins out of the cell cytoplasm. It is a molecular chaperone that binds to a subset of precursor proteins, maintaining them in a translocation-competent state. It also specifically binds to its receptor SecA. The polypeptide is Protein-export protein SecB (Shewanella oneidensis (strain ATCC 700550 / JCM 31522 / CIP 106686 / LMG 19005 / NCIMB 14063 / MR-1)).